The following is a 41-amino-acid chain: Cytochrome b559 subunit beta (41 aa).

A helical transmembrane segment spans residues 16 to 32; it reads WLAIHALAVPTVFFLGS. His20 serves as a coordination point for heme.

The protein belongs to the PsbE/PsbF family. As to quaternary structure, heterodimer of an alpha subunit and a beta subunit. PSII is composed of 1 copy each of membrane proteins PsbA, PsbB, PsbC, PsbD, PsbE, PsbF, PsbH, PsbI, PsbJ, PsbK, PsbL, PsbM, PsbT, PsbX, PsbY, PsbZ, Psb30/Ycf12, at least 3 peripheral proteins of the oxygen-evolving complex and a large number of cofactors. It forms dimeric complexes. Heme b serves as cofactor.

The protein localises to the plastid. The protein resides in the chloroplast thylakoid membrane. In terms of biological role, this b-type cytochrome is tightly associated with the reaction center of photosystem II (PSII). PSII is a light-driven water:plastoquinone oxidoreductase that uses light energy to abstract electrons from H(2)O, generating O(2) and a proton gradient subsequently used for ATP formation. It consists of a core antenna complex that captures photons, and an electron transfer chain that converts photonic excitation into a charge separation. The chain is Cytochrome b559 subunit beta from Oltmannsiellopsis viridis (Marine flagellate).